We begin with the raw amino-acid sequence, 264 residues long: CD320 antigen (264 aa).

Positions 1–28 (MARCGAGRAAALGLVLRLLLGLRTGPEA) are cleaved as a signal peptide. The LDL-receptor class A 1 domain occupies 50–87 (SCPTDTFKCLTSGYCVPLSWRCDGDRDCSDGSDEEECR). 3 disulfides stabilise this stretch: Cys-51–Cys-64, Cys-58–Cys-77, and Cys-71–Cys-86. The Ca(2+) site is built by Trp-69, Asp-72, Asp-74, Asp-76, Asp-82, and Glu-83. Asn-122 is a glycosylation site (N-linked (GlcNAc...) asparagine). In terms of domain architecture, LDL-receptor class A 2 spans 127 to 164 (PCQEGELRCILDDVCIPHTWRCDGHPDCPDSSDELSCD). 3 cysteine pairs are disulfide-bonded: Cys-128/Cys-141, Cys-135/Cys-154, and Cys-148/Cys-163. The Ca(2+) site is built by Trp-146, Asp-149, His-151, Asp-153, Asp-159, and Glu-160. N-linked (GlcNAc...) asparagine glycosylation occurs at Asn-195. The helical transmembrane segment at 213 to 233 (VIAAAGVLSAILVSATILILL) threads the bilayer.

In terms of assembly, interacts (via LDL-receptor class A domains) with TCN2.

It is found in the cell membrane. Functionally, receptor for transcobalamin saturated with cobalamin (TCbl). Plays an important role in cobalamin uptake. Plasma membrane protein that is expressed on follicular dendritic cells (FDC) and mediates interaction with germinal center B cells. Functions as a costimulator to promote B cell responses to antigenic stimuli; promotes B cell differentiation and proliferation. Germinal center-B (GC-B) cells differentiate into memory B-cells and plasma cells (PC) through interaction with T-cells and follicular dendritic cells (FDC). CD320 augments the proliferation of PC precursors generated by IL-10. The sequence is that of CD320 antigen (Cd320) from Rattus norvegicus (Rat).